The following is a 261-amino-acid chain: Putative hydro-lyase Sfum_3393 (261 aa).

This sequence belongs to the D-glutamate cyclase family.

This Syntrophobacter fumaroxidans (strain DSM 10017 / MPOB) protein is Putative hydro-lyase Sfum_3393.